We begin with the raw amino-acid sequence, 333 residues long: Ribosomal RNA small subunit methyltransferase H (333 aa).

S-adenosyl-L-methionine contacts are provided by residues 34 to 36 (GGH), aspartate 59, phenylalanine 86, aspartate 112, and glutamine 119.

Belongs to the methyltransferase superfamily. RsmH family.

The protein localises to the cytoplasm. The enzyme catalyses cytidine(1402) in 16S rRNA + S-adenosyl-L-methionine = N(4)-methylcytidine(1402) in 16S rRNA + S-adenosyl-L-homocysteine + H(+). Functionally, specifically methylates the N4 position of cytidine in position 1402 (C1402) of 16S rRNA. The protein is Ribosomal RNA small subunit methyltransferase H of Prosthecochloris aestuarii (strain DSM 271 / SK 413).